The primary structure comprises 69 residues: Conotoxin AbVIF (69 aa).

The first 17 residues, 1–17, serve as a signal peptide directing secretion; the sequence is VLIIAVLFLTACQLTTA. Residues 18 to 40 constitute a propeptide that is removed on maturation; it reads ETSSRGKQKHRALRSTDKNSRMS. Residues 20-41 form a disordered region; that stretch reads SSRGKQKHRALRSTDKNSRMSK. Disulfide bonds link Cys43/Cys57, Cys50/Cys61, and Cys56/Cys68.

This sequence belongs to the conotoxin O1 superfamily. In terms of tissue distribution, expressed by the venom duct.

It is found in the secreted. The protein is Conotoxin AbVIF of Conus abbreviatus (Abbreviated cone).